A 493-amino-acid chain; its full sequence is Cytochrome c-552 (493 aa).

The first 25 residues, 1-25 (MEKKLKSWQGWLLSGGSMVVVFVLG), serve as a signal peptide directing secretion. His-116 serves as a coordination point for heme c. Heme contacts are provided by Cys-144, Cys-147, and Lys-148. 6 residues coordinate heme c: Cys-182, Cys-185, His-186, Cys-224, Cys-227, and His-228. Glu-230, Tyr-231, Lys-276, and Gln-278 together coordinate Ca(2+). Tyr-231 contributes to the substrate binding site. A substrate-binding site is contributed by His-279. Residues His-290, Cys-297, Cys-300, His-301, His-315, Cys-328, Cys-331, His-332, and His-407 each coordinate heme c.

This sequence belongs to the cytochrome c-552 family. Ca(2+) serves as cofactor. It depends on heme c as a cofactor.

It localises to the periplasm. It catalyses the reaction 6 Fe(III)-[cytochrome c] + NH4(+) + 2 H2O = 6 Fe(II)-[cytochrome c] + nitrite + 8 H(+). Its pathway is nitrogen metabolism; nitrate reduction (assimilation). Its function is as follows. Catalyzes the reduction of nitrite to ammonia, consuming six electrons in the process. This Bacteroides thetaiotaomicron (strain ATCC 29148 / DSM 2079 / JCM 5827 / CCUG 10774 / NCTC 10582 / VPI-5482 / E50) protein is Cytochrome c-552.